The primary structure comprises 459 residues: 5-hydroxytryptamine receptor 2C (459 aa).

Positions 1-32 (MVNLGTAVRSLLVHLIGLLVWQFDISISPVAA) are cleaved as a signal peptide. At 33 to 56 (IVTDTFNSSDGGRLFQFPDGVQNW) the chain is on the extracellular side. Residues 57–81 (PALSIVVIIIMTIGGNILVIMAVSM) traverse the membrane as a helical segment. Over 82–87 (EKKLHN) the chain is Cytoplasmic. The helical transmembrane segment at 88–112 (ATNYFLMSLAIADMLVGLLVMPLSL) threads the bilayer. Topologically, residues 113-129 (LAILYDYVWPLPRYLCP) are extracellular. A disulfide bridge links cysteine 128 with cysteine 208. A helical transmembrane segment spans residues 130 to 152 (VWISLDVLFSTASIMHLCAISLD). Threonine 140 lines the ergotamine pocket. The short motif at 152–154 (DRY) is the DRY motif; important for ligand-induced conformation changes element. Topologically, residues 153–168 (RYVAIRNPIEHSRFNS) are cytoplasmic. A helical membrane pass occupies residues 169-190 (RTKAIMKIAIVWAISIGVSVPI). At 191–214 (PVIGLRDESKVFVNNTTCVLNDPN) the chain is on the extracellular side. 2 N-linked (GlcNAc...) asparagine glycosylation sites follow: asparagine 204 and asparagine 205. Leucine 210 contributes to the ergotamine binding site. Residues 215-237 (FVLIGSFVAFFIPLTIMVITYFL) traverse the membrane as a helical segment. At 238–312 (TIYVLRRQTL…AINNEKKASK (75 aa)) the chain is on the cytoplasmic side. The tract at residues 274–302 (DEEENAPNPNPDQKPRRKKKEKRPRGTMQ) is disordered. A compositionally biased stretch (basic residues) spans 288 to 298 (PRRKKKEKRPR). The chain crosses the membrane as a helical span at residues 313–337 (VLGIVFFVFLIMWCPFFITNILSVL). Cysteine 338 and cysteine 342 are oxidised to a cystine. At 338 to 348 (CGKACNQKLME) the chain is on the extracellular side. Residues 349 to 371 (KLLNVFVWIGYVCSGINPLVYTL) form a helical membrane-spanning segment. The NPxxY motif; important for ligand-induced conformation changes and signaling motif lies at 365 to 369 (NPLVY). Residues 372-459 (FNKIYRRAFS…NVVSERISSV (88 aa)) lie on the Cytoplasmic side of the membrane. Residues 457 to 459 (SSV) carry the PDZ-binding motif.

It belongs to the G-protein coupled receptor 1 family. As to quaternary structure, interacts with MPDZ. Interacts with ARRB2. Interacts with MPP3; this interaction stabilizes the receptor at the plasma membrane and prevents the desensitization of the HTR2C receptor-mediated calcium response. As to expression, detected in brain cortex, hypothalamus, brainstem and arcuate nucleus. Detected in the paraventricular nucleus of the hypothalamus.

It localises to the cell membrane. Functionally, G-protein coupled receptor for 5-hydroxytryptamine (serotonin). Also functions as a receptor for various drugs and psychoactive substances, including ergot alkaloid derivatives, 1-2,5,-dimethoxy-4-iodophenyl-2-aminopropane (DOI) and lysergic acid diethylamide (LSD). Ligand binding causes a conformation change that triggers signaling via guanine nucleotide-binding proteins (G proteins) and modulates the activity of downstream effectors. HTR2C is coupled to G(q)/G(11) G alpha proteins and activates phospholipase C-beta, releasing diacylglycerol (DAG) and inositol 1,4,5-trisphosphate (IP3) second messengers that modulate the activity of phosphatidylinositol 3-kinase and promote the release of Ca(2+) ions from intracellular stores, respectively. Beta-arrestin family members inhibit signaling via G proteins and mediate activation of alternative signaling pathways. Regulates neuronal activity via the activation of short transient receptor potential calcium channels in the brain, and thereby modulates the activation of pro-opiomelanocortin neurons and the release of CRH that then regulates the release of corticosterone. Plays a role in the regulation of appetite and eating behavior, responses to anxiogenic stimuli and stress. Plays a role in insulin sensitivity and glucose homeostasis. This is 5-hydroxytryptamine receptor 2C from Mus musculus (Mouse).